Reading from the N-terminus, the 398-residue chain is tRNA-specific 2-thiouridylase MnmA (398 aa).

Residues Ala-20–Ser-27 and Leu-46 contribute to the ATP site. Catalysis depends on Cys-114, which acts as the Nucleophile. Residues Cys-114 and Cys-210 are joined by a disulfide bond. Gly-138 serves as a coordination point for ATP. The tract at residues Arg-160 to Gln-162 is interaction with tRNA. Cys-210 serves as the catalytic Cysteine persulfide intermediate.

Belongs to the MnmA/TRMU family.

The protein localises to the cytoplasm. It carries out the reaction S-sulfanyl-L-cysteinyl-[protein] + uridine(34) in tRNA + AH2 + ATP = 2-thiouridine(34) in tRNA + L-cysteinyl-[protein] + A + AMP + diphosphate + H(+). In terms of biological role, catalyzes the 2-thiolation of uridine at the wobble position (U34) of tRNA, leading to the formation of s(2)U34. The chain is tRNA-specific 2-thiouridylase MnmA from Brucella canis (strain ATCC 23365 / NCTC 10854 / RM-666).